The primary structure comprises 81 residues: Sulfur carrier protein TusA (81 aa).

The active-site Cysteine persulfide intermediate is Cys-19.

Belongs to the sulfur carrier protein TusA family. Interacts with IscS.

It localises to the cytoplasm. Its pathway is tRNA modification. Its function is as follows. Sulfur carrier protein involved in sulfur trafficking in the cell. Part of a sulfur-relay system required for 2-thiolation during synthesis of 2-thiouridine of the modified wobble base 5-methylaminomethyl-2-thiouridine (mnm(5)s(2)U) in tRNA. Interacts with IscS and stimulates its cysteine desulfurase activity. Accepts an activated sulfur from IscS, which is then transferred to TusD, and thus determines the direction of sulfur flow from IscS to 2-thiouridine formation. Also appears to be involved in sulfur transfer for the biosynthesis of molybdopterin. In Enterobacter sp. (strain 638), this protein is Sulfur carrier protein TusA.